Here is a 396-residue protein sequence, read N- to C-terminus: Acetate kinase (396 aa).

Asn-7 serves as a coordination point for Mg(2+). ATP is bound at residue Lys-14. Arg-88 contributes to the substrate binding site. The Proton donor/acceptor role is filled by Asp-145. ATP contacts are provided by residues 203–207 (HAGNG), 278–280 (DAR), and 326–330 (GIGEN). Mg(2+) is bound at residue Glu-379.

It belongs to the acetokinase family. Homodimer. Mg(2+) serves as cofactor. The cofactor is Mn(2+).

It is found in the cytoplasm. It carries out the reaction acetate + ATP = acetyl phosphate + ADP. It functions in the pathway metabolic intermediate biosynthesis; acetyl-CoA biosynthesis; acetyl-CoA from acetate: step 1/2. In terms of biological role, catalyzes the formation of acetyl phosphate from acetate and ATP. Can also catalyze the reverse reaction. The sequence is that of Acetate kinase from Phytoplasma australiense.